Reading from the N-terminus, the 363-residue chain is Chorismate synthase (363 aa).

NADP(+) contacts are provided by R48 and R54. FMN contacts are provided by residues 125 to 127, 238 to 239, G278, 293 to 297, and R319; these read RSS, NA, and KPTSS.

It belongs to the chorismate synthase family. As to quaternary structure, homotetramer. It depends on FMNH2 as a cofactor.

It carries out the reaction 5-O-(1-carboxyvinyl)-3-phosphoshikimate = chorismate + phosphate. Its pathway is metabolic intermediate biosynthesis; chorismate biosynthesis; chorismate from D-erythrose 4-phosphate and phosphoenolpyruvate: step 7/7. Catalyzes the anti-1,4-elimination of the C-3 phosphate and the C-6 proR hydrogen from 5-enolpyruvylshikimate-3-phosphate (EPSP) to yield chorismate, which is the branch point compound that serves as the starting substrate for the three terminal pathways of aromatic amino acid biosynthesis. This reaction introduces a second double bond into the aromatic ring system. The polypeptide is Chorismate synthase (Alcanivorax borkumensis (strain ATCC 700651 / DSM 11573 / NCIMB 13689 / SK2)).